Reading from the N-terminus, the 385-residue chain is Zinc finger protein B385R (385 aa).

2 consecutive C2H2-type zinc fingers follow at residues 166 to 190 (LQCP…FYNH) and 168 to 190 (CPNC…FYNH).

It belongs to the asfivirus B385R family.

The chain is Zinc finger protein B385R from African swine fever virus (isolate Tick/South Africa/Pretoriuskop Pr4/1996) (ASFV).